The primary structure comprises 236 residues: Ribosomal RNA large subunit methyltransferase E (236 aa).

Residues glycine 76, tryptophan 78, aspartate 99, aspartate 115, and aspartate 140 each coordinate S-adenosyl-L-methionine. Catalysis depends on lysine 180, which acts as the Proton acceptor.

It belongs to the class I-like SAM-binding methyltransferase superfamily. RNA methyltransferase RlmE family.

Its subcellular location is the cytoplasm. The catalysed reaction is uridine(2552) in 23S rRNA + S-adenosyl-L-methionine = 2'-O-methyluridine(2552) in 23S rRNA + S-adenosyl-L-homocysteine + H(+). In terms of biological role, specifically methylates the uridine in position 2552 of 23S rRNA at the 2'-O position of the ribose in the fully assembled 50S ribosomal subunit. The protein is Ribosomal RNA large subunit methyltransferase E of Rhodopseudomonas palustris (strain HaA2).